The chain runs to 126 residues: Glycine--tRNA ligase beta subunit (126 aa).

The protein belongs to the class-II aminoacyl-tRNA synthetase family. As to quaternary structure, tetramer of two alpha and two beta subunits.

It localises to the cytoplasm. The enzyme catalyses tRNA(Gly) + glycine + ATP = glycyl-tRNA(Gly) + AMP + diphosphate. This is Glycine--tRNA ligase beta subunit (glyS) from Neisseria gonorrhoeae.